The chain runs to 780 residues: Translation initiation factor IF-2 (780 aa).

Residues 44 to 194 (RQLDNAVDGT…TPPKPKELPE (151 aa)) form a disordered region. The segment covering 53–65 (TNKKAEAPKKETT) has biased composition (basic and acidic residues). A compositionally biased stretch (polar residues) spans 66 to 81 (SNENGNSKGPNKPNMT). 2 stretches are compositionally biased toward low complexity: residues 82-93 (NSNEKSNKPNKP) and 117-168 (ANTS…NNKG). A tr-type G domain is found at 281–450 (ERPPVVTIMG…LLVSEVEELK (170 aa)). The G1 stretch occupies residues 290 to 297 (GHVDHGKT). Position 290-297 (290-297 (GHVDHGKT)) interacts with GTP. The tract at residues 315 to 319 (GITQH) is G2. The G3 stretch occupies residues 336–339 (DTPG). GTP contacts are provided by residues 336–340 (DTPGH) and 390–393 (NKID). Residues 390–393 (NKID) form a G4 region. Residues 426-428 (SAK) are G5.

Belongs to the TRAFAC class translation factor GTPase superfamily. Classic translation factor GTPase family. IF-2 subfamily.

It is found in the cytoplasm. One of the essential components for the initiation of protein synthesis. Protects formylmethionyl-tRNA from spontaneous hydrolysis and promotes its binding to the 30S ribosomal subunits. Also involved in the hydrolysis of GTP during the formation of the 70S ribosomal complex. The sequence is that of Translation initiation factor IF-2 from Listeria welshimeri serovar 6b (strain ATCC 35897 / DSM 20650 / CCUG 15529 / CIP 8149 / NCTC 11857 / SLCC 5334 / V8).